Consider the following 344-residue polypeptide: Glycerol-3-phosphate dehydrogenase [NAD(P)+] (344 aa).

NADPH contacts are provided by tryptophan 11, arginine 31, arginine 32, and lysine 105. 3 residues coordinate sn-glycerol 3-phosphate: lysine 105, glycine 133, and serine 135. Alanine 137 provides a ligand contact to NADPH. The sn-glycerol 3-phosphate site is built by lysine 188, aspartate 241, serine 251, arginine 252, and asparagine 253. Lysine 188 functions as the Proton acceptor in the catalytic mechanism. Arginine 252 contributes to the NADPH binding site. Glutamate 278 lines the NADPH pocket.

It belongs to the NAD-dependent glycerol-3-phosphate dehydrogenase family.

It is found in the cytoplasm. It carries out the reaction sn-glycerol 3-phosphate + NAD(+) = dihydroxyacetone phosphate + NADH + H(+). The enzyme catalyses sn-glycerol 3-phosphate + NADP(+) = dihydroxyacetone phosphate + NADPH + H(+). Its pathway is membrane lipid metabolism; glycerophospholipid metabolism. In terms of biological role, catalyzes the reduction of the glycolytic intermediate dihydroxyacetone phosphate (DHAP) to sn-glycerol 3-phosphate (G3P), the key precursor for phospholipid synthesis. The chain is Glycerol-3-phosphate dehydrogenase [NAD(P)+] from Acidithiobacillus ferrooxidans (strain ATCC 23270 / DSM 14882 / CIP 104768 / NCIMB 8455) (Ferrobacillus ferrooxidans (strain ATCC 23270)).